Consider the following 540-residue polypeptide: Suppressor of tumorigenicity 7 protein-like (540 aa).

4 helical membrane passes run 24 to 44 (WSWT…VYVL), 68 to 88 (FYVA…IFEW), 475 to 495 (LPFF…LAML), and 502 to 522 (LMGV…GFFA).

This sequence belongs to the ST7 family.

The protein localises to the membrane. In Danio rerio (Zebrafish), this protein is Suppressor of tumorigenicity 7 protein-like (st7l).